The sequence spans 121 residues: MNALQEDTPPGPSTVFRPPTSSRPLETPHCREIRIGIAGITITLSLCGCANARAPTLRSATADNSESTGFKNVPDLRTDQPKPPSKKRSCDPSEYRVSELKESLITTTPSRPRTARRCIRL.

Disordered regions lie at residues 1–28 (MNAL…LETP) and 57–121 (LRSA…CIRL). The segment covering 58 to 70 (RSATADNSESTGF) has biased composition (polar residues). Positions 88–102 (RSCDPSEYRVSELKE) are enriched in basic and acidic residues.

The protein belongs to the gyrovirus apoptin family.

The protein resides in the host nucleus. Functionally, may act as transcriptional regulator. Induces apoptosis in infected cells. Element of infectious replication cycle. This Gallus gallus (Chicken) protein is Apoptin (VP3).